The chain runs to 177 residues: Transcription antitermination protein NusB (177 aa).

Residues 1 to 36 form a disordered region; that stretch reads MTEQPTKPTGSRPPRQPRTGLTSTGARKAGSKSDRS.

Belongs to the NusB family.

Involved in transcription antitermination. Required for transcription of ribosomal RNA (rRNA) genes. Binds specifically to the boxA antiterminator sequence of the ribosomal RNA (rrn) operons. The sequence is that of Transcription antitermination protein NusB from Albidiferax ferrireducens (strain ATCC BAA-621 / DSM 15236 / T118) (Rhodoferax ferrireducens).